Reading from the N-terminus, the 437-residue chain is Probable N-acetylmuramidase (437 aa).

Residues 1–57 (MPVSRVKVKNRHLKKKTKKPLAFYKPTTKFVGAVLIAGTLTTTHELLLQQTSPMVQA) form the signal peptide. 3 disordered regions span residues 217 to 244 (SSAGNTNSGGSTTTNTNNNSGTNSSSTT), 291 to 319 (SSTNSGGSNNSASTTPTTSVTPAKPASQT), and 367 to 392 (ATSNPSTGSGSTATNNSNSTSSNSNA). The 44-residue stretch at 243–286 (TTYTVKSGDTLWGISQRYGISVAQIQSANNLKSTIIYIGQKLLL) folds into the LysM 1 domain. The span at 291–317 (SSTNSGGSNNSASTTPTTSVTPAKPAS) shows a compositional bias: low complexity. Residues 319–362 (TSVKVKSGDTLWALSVKYKTSIAQLKSWNHLSSDTIYIGQNLIV) enclose the LysM 2 domain. A LysM 3 domain is found at 393-436 (SIHKVVKGDTLWGLSQKSGSPIASIKAWNHLSSDTILIGQYLRI).

It belongs to the glycosyl hydrolase 73 family.

It localises to the secreted. It carries out the reaction Hydrolysis of (1-&gt;4)-beta-linkages between N-acetylmuramic acid and N-acetyl-D-glucosamine residues in a peptidoglycan and between N-acetyl-D-glucosamine residues in chitodextrins.. In terms of biological role, hydrolyzes the cell wall of L.lactis and M.lysodeikticus. Required for cell separation during growth. This Lactococcus lactis subsp. cremoris (Streptococcus cremoris) protein is Probable N-acetylmuramidase (acmA).